The primary structure comprises 527 residues: N-acetylglucosamine-1-phosphodiester alpha-N-acetylglucosaminidase (527 aa).

Positions 1-25 (MASSMGRFLLFFIALRGFLLEASGD) are cleaved as a signal peptide. A propeptide spans 26–49 (FGSGASRDDDVLLPYSRARARLAR) (removed in mature form). At 50-463 (DCTRVHAGRL…SLLTRTTWLA (414 aa)) the chain is on the lumenal side. 5 disulfides stabilise this stretch: Cys-116/Cys-149, Cys-133/Cys-324, Cys-308/Cys-315, Cys-363/Cys-374, and Cys-381/Cys-390. N-linked (GlcNAc...) asparagine glycosylation is found at Asn-209, Asn-215, and Asn-297. In terms of domain architecture, EGF-like spans 359–391 (DKLDCGPANCSQHGLCTETGCRCEAGWTGSNCS). N-linked (GlcNAc...) asparagine glycosylation is found at Asn-367, Asn-389, and Asn-421. The helical transmembrane segment at 464–484 (ITLALAFLLLISTAANVSLFL) threads the bilayer. Over 485-527 (GSRAARRRHLDGAYVYHPLQEVNGEHPAAEKEQLGDSSNPFKD) the chain is Cytoplasmic. Residues 498 to 505 (YVYHPLQE) are mediates the interaction with AP4M1. Residues 500–503 (YHPL) carry the Tyrosine-based internalization motif motif. Residues 523-527 (NPFKD) carry the NPF internalization motif motif.

As to quaternary structure, homotetramer arranged as two disulfide-linked homodimers. Interacts with AP4M1. Post-translationally, glycosylated. Contains complex N-linked oligosaccharides with appreciable amounts of sialic acid. The precursor is cleaved and activated in the trans-Golgi network by a furin endopeptidase.

Its subcellular location is the golgi apparatus. It localises to the golgi stack membrane. The protein localises to the trans-Golgi network. It catalyses the reaction N(4)-[6-(N-acetyl-alpha-D-glucosaminyl-1-phospho)-alpha-D-mannosyl-(1-&gt;2)-alpha-D-mannosyl-(glycan)]-L-asparaginyl-[protein] + H2O = N(4)-[6-phospho-alpha-D-mannosyl-(1-&gt;2)-alpha-D-mannosyl-(glycan)]-L-asparaginyl-[protein] + N-acetyl-D-glucosamine + H(+). It functions in the pathway protein modification; protein glycosylation. In terms of biological role, catalyzes the second step in the formation of the mannose 6-phosphate targeting signal on lysosomal enzyme oligosaccharides by removing GlcNAc residues from GlcNAc-alpha-P-mannose moieties, which are formed in the first step. Also hydrolyzes UDP-GlcNAc, a sugar donor for Golgi N-acetylglucosaminyltransferases. This Bos taurus (Bovine) protein is N-acetylglucosamine-1-phosphodiester alpha-N-acetylglucosaminidase (NAGPA).